Consider the following 185-residue polypeptide: Large ribosomal subunit protein uL5c (185 aa).

This sequence belongs to the universal ribosomal protein uL5 family. As to quaternary structure, part of the 50S ribosomal subunit; contacts the 5S rRNA.

The protein localises to the plastid. The protein resides in the chloroplast. Functionally, binds 5S rRNA, forms part of the central protuberance of the 50S subunit. The protein is Large ribosomal subunit protein uL5c (rpl5) of Chlorokybus atmophyticus (Soil alga).